A 208-amino-acid chain; its full sequence is MAKVLYITAHPFNELVSNSMAAGKAFIETYQQQHPDDEVKHIDLFETYIPVIDKDVLTGWGKMSNGETLTDDEQMKVSRLSDILEEFLSADKYVFVTPMWNLSFPPVVKAYIDAISIAGKTFKYSAEGPQGLLTDKKVLHIQSRGGYYTEGPAADFEMGDRYLRTIMTFLGVPSYETIIIEGHNAEPHKTEEIKATSINNAEKLATTF.

FMN is bound by residues 17–19 (SNS), 99–102 (MWNL), and 143–146 (SRGG).

The protein belongs to the azoreductase type 1 family. Homodimer. Requires FMN as cofactor.

It catalyses the reaction 2 a quinone + NADH + H(+) = 2 a 1,4-benzosemiquinone + NAD(+). The enzyme catalyses N,N-dimethyl-1,4-phenylenediamine + anthranilate + 2 NAD(+) = 2-(4-dimethylaminophenyl)diazenylbenzoate + 2 NADH + 2 H(+). Its function is as follows. Quinone reductase that provides resistance to thiol-specific stress caused by electrophilic quinones. In terms of biological role, also exhibits azoreductase activity. Catalyzes the reductive cleavage of the azo bond in aromatic azo compounds to the corresponding amines. This chain is FMN-dependent NADH:quinone oxidoreductase, found in Staphylococcus aureus (strain COL).